Reading from the N-terminus, the 270-residue chain is uncharacterized protein (270 aa).

Residues Met-1–His-37 lie on the Cytoplasmic side of the membrane. Residues Phe-38 to Ile-58 traverse the membrane as a helical segment. At Asn-59–Thr-65 the chain is on the extracellular side. Residues Phe-66–Met-86 traverse the membrane as a helical segment. The Cytoplasmic portion of the chain corresponds to Leu-87 to Arg-93. Residues Leu-94–Val-114 traverse the membrane as a helical segment. At Ala-115–Arg-140 the chain is on the extracellular side. A helical membrane pass occupies residues Ile-141 to Gln-161. Residues Leu-162 to Glu-181 lie on the Cytoplasmic side of the membrane. Residues Trp-182–Val-202 traverse the membrane as a helical segment. Residues Arg-203–Trp-220 are Extracellular-facing. The chain crosses the membrane as a helical span at residues Cys-221–Phe-241. The Cytoplasmic segment spans residues Arg-242–Asp-270.

Belongs to the lipid-translocating exporter (LTE) (TC 9.A.26.1) family.

It is found in the membrane. This is an uncharacterized protein from Saccharomyces cerevisiae (strain ATCC 204508 / S288c) (Baker's yeast).